The primary structure comprises 212 residues: Thymidylate kinase (212 aa).

ATP is bound at residue 11–18 (GPDGAGKS).

It belongs to the thymidylate kinase family.

The catalysed reaction is dTMP + ATP = dTDP + ADP. In terms of biological role, phosphorylation of dTMP to form dTDP in both de novo and salvage pathways of dTTP synthesis. The chain is Thymidylate kinase from Streptococcus gordonii (strain Challis / ATCC 35105 / BCRC 15272 / CH1 / DL1 / V288).